The chain runs to 361 residues: 3-dehydroquinate synthase (361 aa).

NAD(+)-binding positions include 72–77 (SGEKEK), 130–131 (TT), K142, and K151. Residues E184, H247, and H264 each contribute to the Zn(2+) site.

It belongs to the sugar phosphate cyclases superfamily. Dehydroquinate synthase family. Co(2+) serves as cofactor. The cofactor is Zn(2+). NAD(+) is required as a cofactor.

The protein resides in the cytoplasm. The catalysed reaction is 7-phospho-2-dehydro-3-deoxy-D-arabino-heptonate = 3-dehydroquinate + phosphate. It participates in metabolic intermediate biosynthesis; chorismate biosynthesis; chorismate from D-erythrose 4-phosphate and phosphoenolpyruvate: step 2/7. In terms of biological role, catalyzes the conversion of 3-deoxy-D-arabino-heptulosonate 7-phosphate (DAHP) to dehydroquinate (DHQ). The polypeptide is 3-dehydroquinate synthase (Bacillus cereus (strain ATCC 10987 / NRS 248)).